Here is a 37-residue protein sequence, read N- to C-terminus: MRVRASVKTLCRNCKVVRRRGVVRVICTDPRHKQRQG.

It belongs to the bacterial ribosomal protein bL36 family.

The polypeptide is Large ribosomal subunit protein bL36A (Methylobacillus flagellatus (strain ATCC 51484 / DSM 6875 / VKM B-1610 / KT)).